The primary structure comprises 356 residues: MDTSRKIIHIDMDAFYASVEQRDHPEFRGKPLIIGGDPNKRGVVATCSYEARKFGVHSAMPTRQAAKLCPNGIFIHGNMAHYVEVSNQIREIFSRYTDIIEPLSLDEAYLDVTENKKGMKSATMVAREIQQTIYQELGLTASAGVSFNKFIAKIASDFKKPAGITVVTPEEAEAFLEQIPVTKFYGVGKVTAEKLHRLGIETGADLKKWSEWDLIRELHKHGYHLYRHVRGRSNNIVNPHRDRKSVGKETTFEFNVLDSRVLEQSLMQFAKKVEERLIKLQKHGKTVVLKLRYSDFTTITKRLTLNEYTNDTSQIYQAAALLLRESYTGQDSIRLIGLTVTNLKPVYFENLRLEGL.

A UmuC domain is found at 1–188; that stretch reads MDTSRKIIHI…IPVTKFYGVG (188 aa). Positions 11 and 106 each coordinate Mg(2+). Residue E107 is part of the active site.

Belongs to the DNA polymerase type-Y family. In terms of assembly, monomer. Requires Mg(2+) as cofactor.

It is found in the cytoplasm. The catalysed reaction is DNA(n) + a 2'-deoxyribonucleoside 5'-triphosphate = DNA(n+1) + diphosphate. Poorly processive, error-prone DNA polymerase involved in untargeted mutagenesis. Copies undamaged DNA at stalled replication forks, which arise in vivo from mismatched or misaligned primer ends. These misaligned primers can be extended by PolIV. Exhibits no 3'-5' exonuclease (proofreading) activity. May be involved in translesional synthesis, in conjunction with the beta clamp from PolIII. The chain is DNA polymerase IV from Listeria monocytogenes serotype 4b (strain F2365).